The following is a 180-amino-acid chain: Trafficking protein particle complex subunit 3 (180 aa).

The S-palmitoyl cysteine moiety is linked to residue C68.

This sequence belongs to the TRAPP small subunits family. BET3 subfamily. Homodimer. Component of the multisubunit transport protein particle (TRAPP) complex, which includes at least TRAPPC2, TRAPPC2L, TRAPPC3, TRAPPC3L, TRAPPC4, TRAPPC5, TRAPPC8, TRAPPC9, TRAPPC10, TRAPPC11 and TRAPPC12. Heterodimer with TRAPPC6A. The heterodimer TRAPPC3-TRAPPC6A interacts with TRAPPC2L. Heterodimer with TRAPPC6b. The heterodimer TRAPPC6B-TRAPPC3 interacts with TRAPPC1 likely providing a core for TRAPP complex formation. Widely expressed. Expressed in lung, heart, liver, spleen, brain and kidney.

Its subcellular location is the golgi apparatus. It localises to the cis-Golgi network. The protein resides in the endoplasmic reticulum. May play a role in vesicular transport from endoplasmic reticulum to Golgi. The protein is Trafficking protein particle complex subunit 3 of Mus musculus (Mouse).